We begin with the raw amino-acid sequence, 344 residues long: Biotin synthase (344 aa).

Residues 65-290 enclose the Radical SAM core domain; sequence PEVEVEGIIS…RTMLRFAGGR (226 aa). Cysteine 80, cysteine 84, and cysteine 87 together coordinate [4Fe-4S] cluster. Residues cysteine 123, cysteine 156, cysteine 215, and arginine 285 each coordinate [2Fe-2S] cluster.

The protein belongs to the radical SAM superfamily. Biotin synthase family. In terms of assembly, homodimer. The cofactor is [4Fe-4S] cluster. [2Fe-2S] cluster serves as cofactor.

The catalysed reaction is (4R,5S)-dethiobiotin + (sulfur carrier)-SH + 2 reduced [2Fe-2S]-[ferredoxin] + 2 S-adenosyl-L-methionine = (sulfur carrier)-H + biotin + 2 5'-deoxyadenosine + 2 L-methionine + 2 oxidized [2Fe-2S]-[ferredoxin]. It functions in the pathway cofactor biosynthesis; biotin biosynthesis; biotin from 7,8-diaminononanoate: step 2/2. Its function is as follows. Catalyzes the conversion of dethiobiotin (DTB) to biotin by the insertion of a sulfur atom into dethiobiotin via a radical-based mechanism. This is Biotin synthase from Mycolicibacterium paratuberculosis (strain ATCC BAA-968 / K-10) (Mycobacterium paratuberculosis).